The sequence spans 653 residues: Chaperone protein dnaK3 (653 aa).

Thr197 is subject to Phosphothreonine; by autocatalysis.

The protein belongs to the heat shock protein 70 family.

Functionally, acts as a chaperone. This is Chaperone protein dnaK3 (dnaK3) from Nostoc sp. (strain PCC 7120 / SAG 25.82 / UTEX 2576).